The primary structure comprises 394 residues: Elongation factor Tu (394 aa).

A tr-type G domain is found at 10–204; sequence KPHVNVGTIG…HLDTYIPEPE (195 aa). The tract at residues 19–26 is G1; sequence GHVDHGKT. 19–26 is a binding site for GTP; the sequence is GHVDHGKT. Thr26 is a Mg(2+) binding site. The segment at 60–64 is G2; the sequence is GITIN. Residues 81 to 84 form a G3 region; sequence DCPG. Residues 81–85 and 136–139 contribute to the GTP site; these read DCPGH and NKCD. The tract at residues 136–139 is G4; it reads NKCD. The segment at 174 to 176 is G5; it reads SAL.

It belongs to the TRAFAC class translation factor GTPase superfamily. Classic translation factor GTPase family. EF-Tu/EF-1A subfamily. Monomer.

It localises to the cytoplasm. The catalysed reaction is GTP + H2O = GDP + phosphate + H(+). In terms of biological role, GTP hydrolase that promotes the GTP-dependent binding of aminoacyl-tRNA to the A-site of ribosomes during protein biosynthesis. This is Elongation factor Tu from Klebsiella pneumoniae subsp. pneumoniae (strain ATCC 700721 / MGH 78578).